Here is a 396-residue protein sequence, read N- to C-terminus: Elongation factor Tu (396 aa).

The region spanning 11–205 (KPHVNIGTIG…VVDEYIPTPE (195 aa)) is the tr-type G domain. The segment at 20-27 (GHVDHGKT) is G1. Position 20–27 (20–27 (GHVDHGKT)) interacts with GTP. A Mg(2+)-binding site is contributed by Thr-27. The G2 stretch occupies residues 61-65 (GITIN). The tract at residues 82–85 (DAPG) is G3. GTP contacts are provided by residues 82–86 (DAPGH) and 137–140 (NKCD). The segment at 137-140 (NKCD) is G4. The tract at residues 175-177 (SAL) is G5.

It belongs to the TRAFAC class translation factor GTPase superfamily. Classic translation factor GTPase family. EF-Tu/EF-1A subfamily. As to quaternary structure, monomer.

The protein localises to the cytoplasm. The catalysed reaction is GTP + H2O = GDP + phosphate + H(+). GTP hydrolase that promotes the GTP-dependent binding of aminoacyl-tRNA to the A-site of ribosomes during protein biosynthesis. In Lactobacillus delbrueckii subsp. bulgaricus (strain ATCC 11842 / DSM 20081 / BCRC 10696 / JCM 1002 / NBRC 13953 / NCIMB 11778 / NCTC 12712 / WDCM 00102 / Lb 14), this protein is Elongation factor Tu.